Reading from the N-terminus, the 1937-residue chain is Myosin-8 (1937 aa).

In terms of domain architecture, Myosin N-terminal SH3-like spans 35–84 (DAKTSVFVAEPKESYVKSVIQSKDGGKVTVKTESGATLTVKEDQVFPMNP). Phosphothreonine is present on residues Thr66 and Thr71. The 694-residue stretch at 88–781 (DKIEDMAMMT…LLGLLEEMRD (694 aa)) folds into the Myosin motor domain. Position 132 is an N6,N6,N6-trimethyllysine (Lys132). 181 to 188 (GESGAGKT) lines the ATP pocket. Tyr389 carries the post-translational modification Phosphotyrosine. At Thr419 the chain carries Phosphothreonine. Tyr424 carries the phosphotyrosine modification. Phosphoserine is present on Ser625. The segment at 658–680 (LNKLMTNLRSTHPHFVRCIIPNE) is actin-binding. His756 is subject to Pros-methylhistidine. Residues 760–774 (KFGHTKVFFKAGLLG) are actin-binding. Residues 781-813 (DEKLAQIITRTQAVCRGYLMRVEYQKMLLRRES) enclose the IQ domain. The stretch at 842–1937 (LLKSAETEKE…REVHTKISAE (1096 aa)) forms a coiled coil. Phosphoserine occurs at positions 1091 and 1095. The tract at residues 1125-1171 (IEAERASRAKAEKQRSDLSRELEEISERLEEAGGATSAQVEMNKKRE) is disordered. Residues 1127 to 1155 (AERASRAKAEKQRSDLSRELEEISERLEE) are compositionally biased toward basic and acidic residues. Phosphoserine is present on residues Ser1161 and Ser1236. A Phosphothreonine modification is found at Thr1254. At Ser1260 the chain carries Phosphoserine. Thr1285 carries the phosphothreonine modification. Residues Ser1291, Ser1302, and Ser1305 each carry the phosphoserine modification. Tyr1463 carries the phosphotyrosine modification. Thr1466 is subject to Phosphothreonine. Tyr1491 is subject to Phosphotyrosine. Phosphoserine is present on Ser1494. Thr1500 carries the post-translational modification Phosphothreonine. A Phosphoserine modification is found at Ser1513. Phosphothreonine is present on Thr1516. Phosphoserine occurs at positions 1553, 1573, 1602, 1713, and 1725. Thr1729 is modified (phosphothreonine). Ser1738 is modified (phosphoserine).

It belongs to the TRAFAC class myosin-kinesin ATPase superfamily. Myosin family. Muscle myosin is a hexameric protein that consists of 2 heavy chain subunits (MHC), 2 alkali light chain subunits (MLC) and 2 regulatory light chain subunits (MLC-2).

The protein localises to the cytoplasm. The protein resides in the myofibril. Its function is as follows. Muscle contraction. The chain is Myosin-8 (Myh8) from Mus musculus (Mouse).